The chain runs to 111 residues: MNQNTLYVNNLNDKINKNDLRTALYMLFSTYGTVVDIVALKTPKMRGQAHVVFFDPSAAAIAMKALKNFIFFGKEMKIQYAHSKSKIIERIVAENDSRGPLKRLRDEADLE.

The 80-residue stretch at 4–83 (NTLYVNNLND…KEMKIQYAHS (80 aa)) folds into the RRM domain.

Belongs to the 40S cdc5-associated complex (or cwf complex), a spliceosome sub-complex reminiscent of a late-stage spliceosome composed of the U2, U5 and U6 snRNAs and at least brr2, cdc5, cwf2/prp3, cwf3/syf1, cwf4/syf3, cwf5/ecm2, spp42/cwf6, cwf7/spf27, cwf8, cwf9, cwf10, cwf11, cwf12, prp45/cwf13, cwf14, cwf15, cwf16, cwf17, cwf18, cwf19, cwf20, cwf21, cwf22, cwf23, cwf24, cwf25, cwf26, cyp7/cwf27, cwf28, cwf29/ist3, lea1, msl1, prp5/cwf1, prp10, prp12/sap130, prp17, prp22, sap61, sap62, sap114, sap145, slu7, smb1, smd1, smd3, smf1, smg1 and syf2.

It localises to the nucleus. Involved in pre-mRNA splicing. This protein is associated with snRNP U2. It binds stem loop IV of U2 snRNA. The chain is Probable U2 small nuclear ribonucleoprotein B'' (msl1) from Schizosaccharomyces pombe (strain 972 / ATCC 24843) (Fission yeast).